The following is a 489-amino-acid chain: Rhamnulokinase (489 aa).

13–17 (ASSGR) lines the ATP pocket. A disulfide bridge links Cys-68 with Cys-222. Substrate-binding positions include Gly-83 and 236 to 238 (HDT). Catalysis depends on Asp-237, which acts as the Proton acceptor. Thr-259 is an ATP binding site. Asn-296 is a binding site for substrate. Gln-304 contributes to the ATP binding site. Cys-353 and Cys-370 form a disulfide bridge. Gly-402 contacts ATP. A disulfide bond links Cys-413 and Cys-417.

This sequence belongs to the rhamnulokinase family. Requires Mg(2+) as cofactor.

It catalyses the reaction L-rhamnulose + ATP = L-rhamnulose 1-phosphate + ADP + H(+). The protein operates within carbohydrate degradation; L-rhamnose degradation; glycerone phosphate from L-rhamnose: step 2/3. Functionally, involved in the catabolism of L-rhamnose (6-deoxy-L-mannose). Catalyzes the transfer of the gamma-phosphate group from ATP to the 1-hydroxyl group of L-rhamnulose to yield L-rhamnulose 1-phosphate. This Shigella sonnei (strain Ss046) protein is Rhamnulokinase.